The chain runs to 168 residues: DNA damage-inducible transcript 3 protein (168 aa).

The tract at residues 10–18 (FGALSSWEL) is interaction with TRIB3. Residues 10-26 (FGALSSWELEAWYEDLQ) form an N-terminal region. 4 positions are modified to phosphoserine; by CK2: Ser14, Ser15, Ser30, and Ser31. Residues 31-141 (SDENRGTCVS…QLAEENERLK (111 aa)) are disordered. The segment covering 76-90 (SQSPCSPESSQSSLA) has biased composition (low complexity). Phosphoserine; by MAPK14 is present on residues Ser78 and Ser81. Positions 98-161 (QGRTRKRKQS…EATRRALIDR (64 aa)) constitute a bZIP domain. A basic motif region spans residues 100–129 (RTRKRKQSGQSPARAGKQRMKEKEQENERK). Residues 118-141 (RMKEKEQENERKVAQLAEENERLK) are compositionally biased toward basic and acidic residues. The interval 133–147 (LAEENERLKQEIERL) is leucine-zipper.

The protein belongs to the bZIP family. Heterodimer. Interacts with TCF7L2/TCF4, EP300/P300, HDAC1, HDAC5 and HDAC6. Interacts with TRIB3 which blocks its association with EP300/P300. Interacts with FOXO3, CEBPB and ATF4. In terms of processing, ubiquitinated, leading to its degradation by the proteasome. Phosphorylation at serine residues by MAPK14 enhances its transcriptional activation activity while phosphorylation at serine residues by CK2 inhibits its transcriptional activation activity.

The protein localises to the cytoplasm. Its subcellular location is the nucleus. Its function is as follows. Multifunctional transcription factor in ER stress response. Plays an essential role in the response to a wide variety of cell stresses and induces cell cycle arrest and apoptosis in response to ER stress. Plays a dual role both as an inhibitor of CCAAT/enhancer-binding protein (C/EBP) function and as an activator of other genes. Acts as a dominant-negative regulator of C/EBP-induced transcription: dimerizes with members of the C/EBP family, impairs their association with C/EBP binding sites in the promoter regions, and inhibits the expression of C/EBP regulated genes. Positively regulates the transcription of TRIB3, IL6, IL8, IL23, TNFRSF10B/DR5, PPP1R15A/GADD34, BBC3/PUMA, BCL2L11/BIM and ERO1L. Negatively regulates; expression of BCL2 and MYOD1, ATF4-dependent transcriptional activation of asparagine synthetase (ASNS), CEBPA-dependent transcriptional activation of hepcidin (HAMP) and CEBPB-mediated expression of peroxisome proliferator-activated receptor gamma (PPARG). Inhibits the canonical Wnt signaling pathway by binding to TCF7L2/TCF4, impairing its DNA-binding properties and repressing its transcriptional activity. Plays a regulatory role in the inflammatory response through the induction of caspase-11 (CASP4/CASP11) which induces the activation of caspase-1 (CASP1) and both these caspases increase the activation of pro-IL1B to mature IL1B which is involved in the inflammatory response. The protein is DNA damage-inducible transcript 3 protein (DDIT3) of Bos taurus (Bovine).